The chain runs to 351 residues: Phosphoribosylformylglycinamidine cyclo-ligase (351 aa).

Belongs to the AIR synthase family.

It localises to the cytoplasm. It catalyses the reaction 2-formamido-N(1)-(5-O-phospho-beta-D-ribosyl)acetamidine + ATP = 5-amino-1-(5-phospho-beta-D-ribosyl)imidazole + ADP + phosphate + H(+). Its pathway is purine metabolism; IMP biosynthesis via de novo pathway; 5-amino-1-(5-phospho-D-ribosyl)imidazole from N(2)-formyl-N(1)-(5-phospho-D-ribosyl)glycinamide: step 2/2. The polypeptide is Phosphoribosylformylglycinamidine cyclo-ligase (Burkholderia pseudomallei (strain 1710b)).